Consider the following 291-residue polypeptide: MAEEEDEAPGSCLDVSSESFNPLLALYSPQTPLPFPDIRCFNNLAEYESFLRGGARGRARGAQRGQSRGPGGKRKGRKPEPDPERIERLKQLMLPVEEGKVPVRPRRSRAPKNVLTRMPLHAGSPLGELNRCVQDRIRIRVHIRTFKGLRGVCSGFIVAFDKFWNMAMVDVDETYRKPVLGKAFYNEPQLTLTRLFDRLQLQEPGSHDPAKGRPAGPAETLTAPPSKKSTQPSERAAGPPVEPGPQGHSGNRPKQRRRNRKEKVDYQQVFTRHLKQIFIRGENVLLVHIAE.

The disordered stretch occupies residues 55–84; it reads ARGRARGAQRGQSRGPGGKRKGRKPEPDPE. Residues 124-199 enclose the Sm domain; sequence SPLGELNRCV…LTLTRLFDRL (76 aa). The interval 155 to 289 is SM; that stretch reads GFIVAFDKFW…RGENVLLVHI (135 aa). Residues 203–266 are disordered; sequence EPGSHDPAKG…RRNRKEKVDY (64 aa). Basic residues predominate over residues 251–261; sequence NRPKQRRRNRK.

The protein belongs to the snRNP Sm proteins family. Component of the heptameric ring U7 snRNP complex.

The protein localises to the nucleus. Functionally, component of the U7 snRNP complex that is involved in the histone 3'-end pre-mRNA processing. Increases U7 snRNA levels but not histone 3'-end pre-mRNA processing activity, when overexpressed. Binds specifically to the Sm-binding site of U7 snRNA. The sequence is that of U7 snRNA-associated Sm-like protein LSm11 from Xenopus laevis (African clawed frog).